The primary structure comprises 113 residues: U11-theraphotoxin-Hhn1a (113 aa).

The first 21 residues, 1–21 (MNTVRVTFLLVFVLAVSLGQA), serve as a signal peptide directing secretion. Positions 22-74 (DKDENRMEMQEKTEQGESYLDFAENLLLQKLEELEAKLLEEDSEESRNSRQKR) are excised as a propeptide. Cystine bridges form between Cys-75–Cys-90, Cys-82–Cys-95, and Cys-89–Cys-110.

This sequence belongs to the neurotoxin 14 (magi-1) family. 01 (HNTX-16) subfamily. As to expression, expressed by the venom gland.

It localises to the secreted. In terms of biological role, probable ion channel inhibitor. The polypeptide is U11-theraphotoxin-Hhn1a (Cyriopagopus hainanus (Chinese bird spider)).